A 270-amino-acid chain; its full sequence is Glucosamine-6-phosphate deaminase (270 aa).

Asp68 serves as the catalytic Proton acceptor; for enolization step. Asp145 serves as the catalytic For ring-opening step. The Proton acceptor; for ring-opening step role is filled by His147. The active-site For ring-opening step is Glu152.

It belongs to the glucosamine/galactosamine-6-phosphate isomerase family. NagB subfamily.

It catalyses the reaction alpha-D-glucosamine 6-phosphate + H2O = beta-D-fructose 6-phosphate + NH4(+). It participates in amino-sugar metabolism; N-acetylneuraminate degradation; D-fructose 6-phosphate from N-acetylneuraminate: step 5/5. Functionally, catalyzes the reversible isomerization-deamination of glucosamine 6-phosphate (GlcN6P) to form fructose 6-phosphate (Fru6P) and ammonium ion. The chain is Glucosamine-6-phosphate deaminase from Bifidobacterium longum (strain NCC 2705).